Here is a 126-residue protein sequence, read N- to C-terminus: Large ribosomal subunit protein eL8 (126 aa).

This sequence belongs to the eukaryotic ribosomal protein eL8 family. Part of the 50S ribosomal subunit. Probably part of the RNase P complex.

It localises to the cytoplasm. Its function is as follows. Multifunctional RNA-binding protein that recognizes the K-turn motif in ribosomal RNA, the RNA component of RNase P, box H/ACA, box C/D and box C'/D' sRNAs. This is Large ribosomal subunit protein eL8 from Sulfolobus acidocaldarius (strain ATCC 33909 / DSM 639 / JCM 8929 / NBRC 15157 / NCIMB 11770).